We begin with the raw amino-acid sequence, 574 residues long: Calcium-dependent protein kinase 9 (574 aa).

The segment at Met-1 to Asp-64 is disordered. Residue Gly-2 is the site of N-myristoyl glycine attachment. A compositionally biased stretch (low complexity) spans Lys-28–Thr-40. The region spanning Tyr-101–Leu-359 is the Protein kinase domain. ATP contacts are provided by residues Leu-107–Thr-115 and Lys-130. Asp-225 acts as the Proton acceptor in catalysis. The autoinhibitory domain stretch occupies residues Ala-365 to Ile-395. EF-hand domains are found at residues Glu-402–Lys-437, Leu-438–Leu-473, Ser-474–His-509, and Ala-510–Trp-545. 20 residues coordinate Ca(2+): Asp-415, Asp-417, Asn-419, Arg-421, Glu-426, Asp-451, Asp-453, Asn-455, Tyr-457, Glu-462, Asp-487, Asp-489, Ser-491, Tyr-493, Glu-498, Asp-523, Asp-525, Asp-527, Arg-529, and Glu-534.

The protein belongs to the protein kinase superfamily. Ser/Thr protein kinase family. CDPK subfamily. In terms of tissue distribution, expressed in leaf blades and stems. Expressed at low levels in anthers and spikelets.

Its subcellular location is the membrane. The enzyme catalyses L-seryl-[protein] + ATP = O-phospho-L-seryl-[protein] + ADP + H(+). It catalyses the reaction L-threonyl-[protein] + ATP = O-phospho-L-threonyl-[protein] + ADP + H(+). Activated by calcium. Autophosphorylation may play an important role in the regulation of the kinase activity. Its function is as follows. May play a role in signal transduction pathways that involve calcium as a second messenger. Functions in signal transduction pathways that positively regulate responses to drought, osmotic, and dehydration stress. Regulates expression of stress-associated genes in response to drought. Involved in tolerance to drought stress by increasing proline and soluble sugars, and improving stomatal closure. Required for pollen maturation and spikelet fertility. This is Calcium-dependent protein kinase 9 from Oryza sativa subsp. japonica (Rice).